Reading from the N-terminus, the 315-residue chain is Ribosomal RNA small subunit methyltransferase H (315 aa).

S-adenosyl-L-methionine is bound by residues 33-35 (GGH), aspartate 52, phenylalanine 84, aspartate 106, and glutamine 113. The tract at residues 294 to 315 (SSDELEENNRSHSAKLRVAEKL) is disordered.

The protein belongs to the methyltransferase superfamily. RsmH family.

Its subcellular location is the cytoplasm. The enzyme catalyses cytidine(1402) in 16S rRNA + S-adenosyl-L-methionine = N(4)-methylcytidine(1402) in 16S rRNA + S-adenosyl-L-homocysteine + H(+). Its function is as follows. Specifically methylates the N4 position of cytidine in position 1402 (C1402) of 16S rRNA. The chain is Ribosomal RNA small subunit methyltransferase H from Lactobacillus johnsonii (strain CNCM I-12250 / La1 / NCC 533).